The sequence spans 181 residues: MMLQHPGQVSASEVSASAIVPCLSPPGSLVFEDFANLTPFVKEELRFAIQNKHLCHRMSSALESVTVSDRPLGVSITKAEVAPEEDERKKRRRERNKIAAAKCRNKKKEKTECLQKESEKLESVNAELKAQIEELKNEKQHLIYMLNLHRPTCIVRAQNGRTPEDERNLFIQQIKEGTLQS.

Residue Lys78 forms a Glycyl lysine isopeptide (Lys-Gly) (interchain with G-Cter in SUMO2) linkage. Residues 86 to 149 enclose the bZIP domain; it reads DERKKRRRER…QHLIYMLNLH (64 aa). Residues 88–110 form a basic motif region; the sequence is RKKRRRERNKIAAAKCRNKKKEK. The segment at 114 to 142 is leucine-zipper; that stretch reads LQKESEKLESVNAELKAQIEELKNEKQHL. Thr162 carries the post-translational modification Phosphothreonine. Lys175 is covalently cross-linked (Glycyl lysine isopeptide (Lys-Gly) (interchain with G-Cter in SUMO2)).

Belongs to the bZIP family. ATF subfamily. In terms of assembly, binds DNA as a homodimer or a heterodimer. Interacts with KAT5; promoting KAT5 autoacetylation and KAT5 deubiquitination by USP7.

The protein resides in the nucleus. Functionally, this protein binds the cAMP response element (CRE) (consensus: 5'-GTGACGT[AC][AG]-3'), a sequence present in many viral and cellular promoters. Represses transcription from promoters with ATF sites. It may repress transcription by stabilizing the binding of inhibitory cofactors at the promoter. In terms of biological role, activates transcription presumably by sequestering inhibitory cofactors away from the promoters. Its function is as follows. Stress-induced isoform, counteracts the transcriptional repression of isoform 1. The polypeptide is Cyclic AMP-dependent transcription factor ATF-3 (Homo sapiens (Human)).